Here is a 725-residue protein sequence, read N- to C-terminus: Phosphoribosylformylglycinamidine synthase subunit PurL (725 aa).

Residue His-34 is part of the active site. Tyr-37 serves as a coordination point for ATP. Glu-93 is a Mg(2+) binding site. Residues 94-97 (SHNH) and Arg-116 each bind substrate. The active-site Proton acceptor is His-95. Position 117 (Asp-117) interacts with Mg(2+). Residues 220 to 241 (GASFASEDLSEDAETEDRPAVQ) are disordered. A substrate-binding site is contributed by Gln-241. Asp-269 is a Mg(2+) binding site. A substrate-binding site is contributed by 313-315 (ESQ). ATP contacts are provided by Asp-489 and Gly-526. Mg(2+) is bound at residue Asn-527. Position 529 (Ser-529) interacts with substrate.

The protein belongs to the FGAMS family. In terms of assembly, monomer. Part of the FGAM synthase complex composed of 1 PurL, 1 PurQ and 2 PurS subunits.

It localises to the cytoplasm. The catalysed reaction is N(2)-formyl-N(1)-(5-phospho-beta-D-ribosyl)glycinamide + L-glutamine + ATP + H2O = 2-formamido-N(1)-(5-O-phospho-beta-D-ribosyl)acetamidine + L-glutamate + ADP + phosphate + H(+). The protein operates within purine metabolism; IMP biosynthesis via de novo pathway; 5-amino-1-(5-phospho-D-ribosyl)imidazole from N(2)-formyl-N(1)-(5-phospho-D-ribosyl)glycinamide: step 1/2. Functionally, part of the phosphoribosylformylglycinamidine synthase complex involved in the purines biosynthetic pathway. Catalyzes the ATP-dependent conversion of formylglycinamide ribonucleotide (FGAR) and glutamine to yield formylglycinamidine ribonucleotide (FGAM) and glutamate. The FGAM synthase complex is composed of three subunits. PurQ produces an ammonia molecule by converting glutamine to glutamate. PurL transfers the ammonia molecule to FGAR to form FGAM in an ATP-dependent manner. PurS interacts with PurQ and PurL and is thought to assist in the transfer of the ammonia molecule from PurQ to PurL. The polypeptide is Phosphoribosylformylglycinamidine synthase subunit PurL (Haloquadratum walsbyi (strain DSM 16790 / HBSQ001)).